The chain runs to 331 residues: Flotillin-like protein FloA (331 aa).

2 helical membrane passes run 6–26 and 28–48; these read LMILAIVAVAIIVLAVFFTFV and VMLWISALAAGVKISIFTLVG. Residues 236-331 form a required for correct localization region; the sequence is QTDQAEADKN…KDPSDEDRKS (96 aa). Short sequence motifs (EA repeat) lie at residues 240 to 242, 251 to 253, 278 to 282, and 288 to 290; these read AEA, AEE, and EAEAE. Residues 312–331 form a disordered region; that stretch reads EMRDSFGKLTKDPSDEDRKS.

Belongs to the flotillin-like FloA family. In terms of assembly, homooligomerizes. Interacts with FloT. Interacts with FtsH midcell. Interacts with PhoR, colocalizes with PhoR in FloA-only membrane rafts.

Its subcellular location is the cell membrane. It localises to the membrane raft. In terms of biological role, found in functional membrane microdomains (FMM) that may be equivalent to eukaryotic membrane rafts. FMMs are highly dynamic and increase in number as cells age. FloA and FloT function is partially redundant; double deletions have marked synthetic phenotypes. Flotillins are thought to be important factors in membrane fluidity, especially during periods of rapid growth in rich media. Whether specific proteins are associated with FMMs is controversial; in one study FloT rafts have been shown to include proteins involved in adaptation to stationary phase, while FloA-FloT rafts include proteins involved in differentiation including sporulation, biofilm formation and DNA uptake competence. Another (more finely resolved) study only showed association of NfeD2 with FloT rafts of all the proteins examined. Involved in spatial organization of membranes, perhaps recruiting proteins to specific membrane regions. Simultaneous overexpression of both FloA and FloT leads to defects in cell division and differentiation, in part caused by stabilization of FtsH and its subsequent increased ability to degrade proteins. Cells make more biofilm, are about half as long, have less EzrA and more frequent Z-rings. The chain is Flotillin-like protein FloA from Bacillus subtilis (strain 168).